Here is a 310-residue protein sequence, read N- to C-terminus: Uracil phosphoribosyltransferase homolog (310 aa).

2 disordered regions span residues 1-27 and 62-89; these read MASE…PSPE and SERD…GNYD. The segment covering 16–25 has biased composition (polar residues); the sequence is RQVNSTSSPS. A Phosphoserine modification is found at serine 25. GTP is bound by residues arginine 134, arginine 143, and 177-180; that span reads EKGN. A 5-phospho-alpha-D-ribose 1-diphosphate-binding site is contributed by arginine 187. The GTP site is built by arginine 204 and arginine 233. 5-phospho-alpha-D-ribose 1-diphosphate is bound at residue 239-247; that stretch reads YPILSTGNT. 300 to 302 is a uracil binding site; sequence THF.

The protein belongs to the UPRTase family.

The protein resides in the cytoplasm. The protein localises to the nucleus. This is Uracil phosphoribosyltransferase homolog (Uprt) from Mus musculus (Mouse).